The following is a 149-amino-acid chain: 5-hydroxytryptamine receptor 1E (149 aa).

The Extracellular portion of the chain corresponds to 1 to 6 (HQPANY). A helical membrane pass occupies residues 7-31 (LICSLAVTDLLVAVLVMPLSIMYIV). The Cytoplasmic segment spans residues 32 to 39 (MDSWRLGY). The helical transmembrane segment at 40–65 (FICEVWLSVDMTCCTCSILHLCVIAL) threads the bilayer. Cysteines 42 and 120 form a disulfide. Residues Asp49 and Cys53 each contribute to the serotonin site. A DRY motif; important for ligand-induced conformation changes motif is present at residues 66-68 (DRY). Residues 66 to 85 (DRYWAITNAIEYARKRTAKR) are Extracellular-facing. The chain crosses the membrane as a helical span at residues 86–104 (AGLMILTVWTISIFISMPP). Topologically, residues 105–149 (LFWRSHRQLSPPPSQCAIQHDHVIYTIYSTLGAFYIPLTLILILY) are cytoplasmic.

Belongs to the G-protein coupled receptor 1 family.

The protein localises to the cell membrane. In terms of biological role, G-protein coupled receptor for 5-hydroxytryptamine (serotonin). Also functions as a receptor for various alkaloids and psychoactive substances. Ligand binding causes a conformation change that triggers signaling via guanine nucleotide-binding proteins (G proteins) and modulates the activity of downstream effectors, such as adenylate cyclase. HTR1E is coupled to G(i)/G(o) G alpha proteins and mediates inhibitory neurotransmission by inhibiting adenylate cyclase activity. The sequence is that of 5-hydroxytryptamine receptor 1E (HTR1E) from Sus scrofa (Pig).